Consider the following 319-residue polypeptide: Formimidoylglutamase (319 aa).

Mn(2+) contacts are provided by histidine 127, aspartate 150, histidine 152, aspartate 154, aspartate 242, and aspartate 244.

The protein belongs to the arginase family. It depends on Mn(2+) as a cofactor.

It carries out the reaction N-formimidoyl-L-glutamate + H2O = formamide + L-glutamate. The protein operates within amino-acid degradation; L-histidine degradation into L-glutamate; L-glutamate from N-formimidoyl-L-glutamate (hydrolase route): step 1/1. In terms of biological role, catalyzes the conversion of N-formimidoyl-L-glutamate to L-glutamate and formamide. This Halalkalibacterium halodurans (strain ATCC BAA-125 / DSM 18197 / FERM 7344 / JCM 9153 / C-125) (Bacillus halodurans) protein is Formimidoylglutamase.